A 268-amino-acid polypeptide reads, in one-letter code: Putative carbamate hydrolase RutD (268 aa).

The 220-residue stretch at 24–243 folds into the AB hydrolase-1 domain; the sequence is VILSAGLGGS…NATLDIAPWG (220 aa).

Belongs to the AB hydrolase superfamily. Hydrolase RutD family.

It catalyses the reaction carbamate + 2 H(+) = NH4(+) + CO2. Its function is as follows. Involved in pyrimidine catabolism. May facilitate the hydrolysis of carbamate, a reaction that can also occur spontaneously. In Caulobacter sp. (strain K31), this protein is Putative carbamate hydrolase RutD.